A 246-amino-acid chain; its full sequence is Ubiquinone biosynthesis O-methyltransferase (246 aa).

R40, G70, D91, and M135 together coordinate S-adenosyl-L-methionine.

The protein belongs to the methyltransferase superfamily. UbiG/COQ3 family.

The enzyme catalyses a 3-demethylubiquinol + S-adenosyl-L-methionine = a ubiquinol + S-adenosyl-L-homocysteine + H(+). It carries out the reaction a 3-(all-trans-polyprenyl)benzene-1,2-diol + S-adenosyl-L-methionine = a 2-methoxy-6-(all-trans-polyprenyl)phenol + S-adenosyl-L-homocysteine + H(+). It participates in cofactor biosynthesis; ubiquinone biosynthesis. Its function is as follows. O-methyltransferase that catalyzes the 2 O-methylation steps in the ubiquinone biosynthetic pathway. In Colwellia psychrerythraea (strain 34H / ATCC BAA-681) (Vibrio psychroerythus), this protein is Ubiquinone biosynthesis O-methyltransferase.